Reading from the N-terminus, the 369-residue chain is Eukaryotic translation initiation factor 3 subunit F (369 aa).

In terms of domain architecture, MPN spans 31 to 170 (VNIQPQAVFS…TKTYISAPVA (140 aa)). The span at 309–334 (LDEGKEGGEKKDGEGAEGDKKTDGQR) shows a compositional bias: basic and acidic residues. The disordered stretch occupies residues 309 to 369 (LDEGKEGGEK…EPREPREAAE (61 aa)). Gly residues predominate over residues 335–353 (GQRGQGGKRGGRSGGAGGR). Basic and acidic residues predominate over residues 354-369 (GGREQREPREPREAAE).

Belongs to the eIF-3 subunit F family. In terms of assembly, component of the eukaryotic translation initiation factor 3 (eIF-3) complex.

The protein resides in the cytoplasm. In terms of biological role, component of the eukaryotic translation initiation factor 3 (eIF-3) complex, which is involved in protein synthesis of a specialized repertoire of mRNAs and, together with other initiation factors, stimulates binding of mRNA and methionyl-tRNAi to the 40S ribosome. The eIF-3 complex specifically targets and initiates translation of a subset of mRNAs involved in cell proliferation. The sequence is that of Eukaryotic translation initiation factor 3 subunit F from Neurospora crassa (strain ATCC 24698 / 74-OR23-1A / CBS 708.71 / DSM 1257 / FGSC 987).